The following is a 126-amino-acid chain: UPF0292 protein TSIB_0423 (126 aa).

Residues 20–100 form the Toprim domain; that stretch reads NGVILVEGMR…RVDTNTRREL (81 aa). Mg(2+)-binding residues include glutamate 26, aspartate 69, and aspartate 71.

It belongs to the UPF0292 family. Mg(2+) serves as cofactor.

In Thermococcus sibiricus (strain DSM 12597 / MM 739), this protein is UPF0292 protein TSIB_0423.